Reading from the N-terminus, the 147-residue chain is NADH-quinone oxidoreductase subunit A (147 aa).

3 consecutive transmembrane segments (helical) span residues 16 to 36 (FAIF…GGWF), 68 to 88 (FYLV…LFAW), and 97 to 117 (WVGF…LVYL).

The protein belongs to the complex I subunit 3 family. As to quaternary structure, NDH-1 is composed of 13 different subunits. Subunits NuoA, H, J, K, L, M, N constitute the membrane sector of the complex.

Its subcellular location is the cell inner membrane. The catalysed reaction is a quinone + NADH + 5 H(+)(in) = a quinol + NAD(+) + 4 H(+)(out). Functionally, NDH-1 shuttles electrons from NADH, via FMN and iron-sulfur (Fe-S) centers, to quinones in the respiratory chain. The immediate electron acceptor for the enzyme in this species is believed to be ubiquinone. Couples the redox reaction to proton translocation (for every two electrons transferred, four hydrogen ions are translocated across the cytoplasmic membrane), and thus conserves the redox energy in a proton gradient. The polypeptide is NADH-quinone oxidoreductase subunit A (Salmonella paratyphi A (strain ATCC 9150 / SARB42)).